Reading from the N-terminus, the 180-residue chain is ADP-ribosylation factor 4 (180 aa).

G2 carries N-myristoyl glycine lipidation. Residues 24–31, 67–71, and 126–129 contribute to the GTP site; these read GLDAAGKT, DVGGQ, and NKQD. S147 carries the post-translational modification Phosphoserine.

The protein belongs to the small GTPase superfamily. Arf family. In terms of assembly, forms a complex containing RAB11A, ASAP1, RAB3IP, RAP11FIP3 and ARF4; the complex promotes preciliary trafficking; the complex binds to RHO in photoreceptor cells and promotes RHO ciliary transport.

It is found in the golgi apparatus. The protein localises to the membrane. GTP-binding protein that functions as an allosteric activator of the cholera toxin catalytic subunit, an ADP-ribosyltransferase. Involved in protein trafficking; may modulate vesicle budding and uncoating within the Golgi apparatus. Part of the ciliary targeting complex containing Rab11, ASAP1, Rabin8/RAB3IP, RAB11FIP3 and ARF4, which direct preciliary vesicle trafficking to mother centriole and ciliogenesis initiation. The sequence is that of ADP-ribosylation factor 4 (ARF4) from Bos taurus (Bovine).